A 203-amino-acid chain; its full sequence is uncharacterized protein (203 aa).

It belongs to the mimivirus L332/L333/L334 family.

This is an uncharacterized protein from Acanthamoeba polyphaga mimivirus (APMV).